Reading from the N-terminus, the 140-residue chain is Nucleoside diphosphate kinase (140 aa).

ATP contacts are provided by Lys11, Phe59, Arg87, Thr93, Arg104, and Asn114. Catalysis depends on His117, which acts as the Pros-phosphohistidine intermediate.

The protein belongs to the NDK family. As to quaternary structure, homotetramer. It depends on Mg(2+) as a cofactor.

The protein resides in the cytoplasm. The catalysed reaction is a 2'-deoxyribonucleoside 5'-diphosphate + ATP = a 2'-deoxyribonucleoside 5'-triphosphate + ADP. The enzyme catalyses a ribonucleoside 5'-diphosphate + ATP = a ribonucleoside 5'-triphosphate + ADP. Its function is as follows. Major role in the synthesis of nucleoside triphosphates other than ATP. The ATP gamma phosphate is transferred to the NDP beta phosphate via a ping-pong mechanism, using a phosphorylated active-site intermediate. In Rhizobium rhizogenes (strain K84 / ATCC BAA-868) (Agrobacterium radiobacter), this protein is Nucleoside diphosphate kinase.